We begin with the raw amino-acid sequence, 241 residues long: Endo-chitosanase B (241 aa).

A signal peptide spans 1–17 (MRLSEILAVALVTGATA). An N-linked (GlcNAc...) asparagine glycan is attached at asparagine 86.

It belongs to the glycosyl hydrolase 75 family.

The protein localises to the secreted. It catalyses the reaction Endohydrolysis of beta-(1-&gt;4)-linkages between D-glucosamine residues in a partly acetylated chitosan.. Chitosanase catalyzing the endo-type cleavage of chitosan, the deacylated form of chitin. Chitosanase may be crucial in the degradation of the deacetylated portion of chitin in the fungal cell wall. Chitoolisaccharides produced by the hydrolysis of partially N-acetylated chitosan are known to have many biological activities, including antibacterial activity, immune-enhancing effects, and elicitor activity. The polypeptide is Endo-chitosanase B (csnB) (Aspergillus oryzae (strain ATCC 42149 / RIB 40) (Yellow koji mold)).